The following is a 287-amino-acid chain: Protease HtpX (287 aa).

2 helical membrane passes run I4–I24 and L36–L56. Residue H143 participates in Zn(2+) binding. The active site involves E144. H147 lines the Zn(2+) pocket. The next 2 membrane-spanning stretches (helical) occupy residues L158–V178 and M192–I212. E221 contributes to the Zn(2+) binding site.

This sequence belongs to the peptidase M48B family. Zn(2+) serves as cofactor.

It localises to the cell inner membrane. This Vibrio cholerae serotype O1 (strain ATCC 39315 / El Tor Inaba N16961) protein is Protease HtpX.